The chain runs to 505 residues: Maturase K (505 aa).

This sequence belongs to the intron maturase 2 family. MatK subfamily.

The protein resides in the plastid. Its subcellular location is the chloroplast. Its function is as follows. Usually encoded in the trnK tRNA gene intron. Probably assists in splicing its own and other chloroplast group II introns. This Nuphar advena (Common spatterdock) protein is Maturase K.